The sequence spans 260 residues: Phosphatidate cytidylyltransferase (260 aa).

7 helical membrane passes run 9–29 (IIAL…LMLF), 46–66 (MIKF…IIML), 70–90 (AGEW…FIVL), 102–122 (FMDA…FMYF), 130–150 (LRYI…AYIF), 172–192 (FFGG…FVDL), and 196–216 (IWLL…GDLV).

The protein belongs to the CDS family.

It is found in the cell membrane. The catalysed reaction is a 1,2-diacyl-sn-glycero-3-phosphate + CTP + H(+) = a CDP-1,2-diacyl-sn-glycerol + diphosphate. The protein operates within phospholipid metabolism; CDP-diacylglycerol biosynthesis; CDP-diacylglycerol from sn-glycerol 3-phosphate: step 3/3. In Staphylococcus epidermidis (strain ATCC 35984 / DSM 28319 / BCRC 17069 / CCUG 31568 / BM 3577 / RP62A), this protein is Phosphatidate cytidylyltransferase (cdsA).